Consider the following 340-residue polypeptide: Protein-arginine kinase (340 aa).

Positions 21–242 constitute a Phosphagen kinase C-terminal domain; that stretch reads VVLSSRIRLA…EQIIMQERVA (222 aa). Residues 24–28, His-79, Arg-113, 164–168, and 195–200 contribute to the ATP site; these read SSRIR, RASVM, and RGIYGE.

It belongs to the ATP:guanido phosphotransferase family.

It catalyses the reaction L-arginyl-[protein] + ATP = N(omega)-phospho-L-arginyl-[protein] + ADP + H(+). Its function is as follows. Catalyzes the specific phosphorylation of arginine residues in proteins. The protein is Protein-arginine kinase of Listeria innocua serovar 6a (strain ATCC BAA-680 / CLIP 11262).